We begin with the raw amino-acid sequence, 194 residues long: Inosine triphosphate pyrophosphatase (194 aa).

10 to 15 (TGNANK) contacts ITP. Glu41 serves as a coordination point for Mg(2+). ITP contacts are provided by residues Lys54, 72 to 73 (DT), Lys89, 147 to 150 (FGWD), Lys172, and 177 to 178 (QR).

Belongs to the HAM1 NTPase family. As to quaternary structure, homodimer. The cofactor is Mg(2+). It depends on Mn(2+) as a cofactor.

It is found in the cytoplasm. The protein localises to the nucleus. The enzyme catalyses ITP + H2O = IMP + diphosphate + H(+). It catalyses the reaction dITP + H2O = dIMP + diphosphate + H(+). The catalysed reaction is XTP + H2O = XMP + diphosphate + H(+). Functionally, pyrophosphatase that hydrolyzes non-canonical purine nucleotides such as inosine triphosphate (ITP), deoxyinosine triphosphate (dITP) or xanthosine 5'-triphosphate (XTP) to their respective monophosphate derivatives. The enzyme does not distinguish between the deoxy- and ribose forms. Probably excludes non-canonical purines from RNA and DNA precursor pools, thus preventing their incorporation into RNA and DNA and avoiding chromosomal lesions. In Kluyveromyces lactis (strain ATCC 8585 / CBS 2359 / DSM 70799 / NBRC 1267 / NRRL Y-1140 / WM37) (Yeast), this protein is Inosine triphosphate pyrophosphatase.